The following is a 439-amino-acid chain: MESRGKILMERYELGRLLGKGTFGKVHYARNLESNQSVAIKMMDKQQVLKVGLSEQIRREITTMRLVAHKNIVQLHEVMATRNKIYFVMEYVKGGELFEKVAKRGKLTEVVAHKYFQQLISAVDYCHSRGVYHRDLKPENLLLDENENLKVSDFGLSALSESKRQDGLLHTTCGTPAYVAPEVISKIGYDGAKSDIWSCGVILFVLVAGYLPFQGPNLMEMYRKIQHGEFRCPGWFSRKLQKLLYKIMDPNPSTRISIQKIKESTWFRKGPEENRILKERTLNENTTKNVALVLGVRRKKNAHEDVKPMSVTNLNAFEIISFSKGFDLSGMFIVKEWRNEARFTSDKSASTIISKLEDVAKALNLRVRKKDNGVVKMQGRKEGRNGVLQFDIEIFEVTTSYHIIEMKQTSGDSLEYRQLLEEGIRPALKDIVLAWHGDE.

The Protein kinase domain maps to 12–267; that stretch reads YELGRLLGKG…IQKIKESTWF (256 aa). ATP-binding positions include 18-26 and Lys-41; that span reads LGKGTFGKV. Asp-135 acts as the Proton acceptor in catalysis. Residues 153–182 are activation loop; that stretch reads DFGLSALSESKRQDGLLHTTCGTPAYVAPE. Residues 298 to 333 enclose the NAF domain; it reads RKKNAHEDVKPMSVTNLNAFEIISFSKGFDLSGMFI. The segment at 338 to 367 is PPI; the sequence is RNEARFTSDKSASTIISKLEDVAKALNLRV.

It belongs to the protein kinase superfamily. CAMK Ser/Thr protein kinase family. SNF1 subfamily. Mn(2+) serves as cofactor.

The enzyme catalyses L-seryl-[protein] + ATP = O-phospho-L-seryl-[protein] + ADP + H(+). It catalyses the reaction L-threonyl-[protein] + ATP = O-phospho-L-threonyl-[protein] + ADP + H(+). CIPK serine-threonine protein kinases interact with CBL proteins. Binding of a CBL protein to the regulatory NAF domain of CIPK protein lead to the activation of the kinase in a calcium-dependent manner. In Oryza sativa subsp. japonica (Rice), this protein is CBL-interacting protein kinase 14 (CIPK14).